The primary structure comprises 519 residues: Histidine--tRNA ligase, cytoplasmic (519 aa).

L-histidine contacts are provided by residues 135 to 137 (DLT), Arg-162, Gln-178, Asp-182, Arg-331, and 335 to 336 (YY).

Belongs to the class-II aminoacyl-tRNA synthetase family. As to quaternary structure, homodimer.

The protein resides in the cytoplasm. It carries out the reaction tRNA(His) + L-histidine + ATP = L-histidyl-tRNA(His) + AMP + diphosphate + H(+). Its function is as follows. Catalyzes the ATP-dependent ligation of histidine to the 3'-end of its cognate tRNA, via the formation of an aminoacyl-adenylate intermediate (His-AMP). Plays a role in axon guidance. The protein is Histidine--tRNA ligase, cytoplasmic (hars1) of Takifugu rubripes (Japanese pufferfish).